The chain runs to 654 residues: tRNA 5-methylaminomethyl-2-thiouridine biosynthesis bifunctional protein MnmC (654 aa).

Positions 1–235 (MSDFQHAQLD…KREMLGGTYQ (235 aa)) are tRNA (mnm(5)s(2)U34)-methyltransferase. Positions 261–654 (VGGGLAGCAS…LRDLVRGQRG (394 aa)) are FAD-dependent cmnm(5)s(2)U34 oxidoreductase.

It in the N-terminal section; belongs to the methyltransferase superfamily. tRNA (mnm(5)s(2)U34)-methyltransferase family. This sequence in the C-terminal section; belongs to the DAO family. It depends on FAD as a cofactor.

It is found in the cytoplasm. The enzyme catalyses 5-aminomethyl-2-thiouridine(34) in tRNA + S-adenosyl-L-methionine = 5-methylaminomethyl-2-thiouridine(34) in tRNA + S-adenosyl-L-homocysteine + H(+). Functionally, catalyzes the last two steps in the biosynthesis of 5-methylaminomethyl-2-thiouridine (mnm(5)s(2)U) at the wobble position (U34) in tRNA. Catalyzes the FAD-dependent demodification of cmnm(5)s(2)U34 to nm(5)s(2)U34, followed by the transfer of a methyl group from S-adenosyl-L-methionine to nm(5)s(2)U34, to form mnm(5)s(2)U34. The protein is tRNA 5-methylaminomethyl-2-thiouridine biosynthesis bifunctional protein MnmC of Pseudomonas paraeruginosa (strain DSM 24068 / PA7) (Pseudomonas aeruginosa (strain PA7)).